The primary structure comprises 168 residues: MQTPQFLQQRRKFAAAFLAFIFLLAVVDTAEAGKKEKPEKKVKKSDCGEWQWSVCVPTSGDCGLGTREGTRTGAECKQTMKTQRCKIPCNWKKQFGAECKYQFQAWGECDLNTALKTRTGSLKRALHNADCQKTVTISKPCGKVTKPKPQAESKKKKKEGKKQEKMLD.

Residues 1-32 (MQTPQFLQQRRKFAAAFLAFIFLLAVVDTAEA) form the signal peptide. Disulfide bonds link cysteine 47–cysteine 76, cysteine 55–cysteine 85, cysteine 62–cysteine 89, cysteine 99–cysteine 131, and cysteine 109–cysteine 141. 2 chondroitin sulfate binding regions span residues 92 to 99 (KKQFGAEC) and 123 to 131 (KRALHNADC). Residues 139 to 168 (KPCGKVTKPKPQAESKKKKKEGKKQEKMLD) form a disordered region. Residues 147-168 (PKPQAESKKKKKEGKKQEKMLD) form a chondroitin sulfate A binding region.

This sequence belongs to the pleiotrophin family. Interacts with ALK and NEK6. Interacts with PTPRZ1 (via chondroitin sulfate groups); promotes formation of homooligomers; oligomerization impairs tyrosine phosphatase activity. Forms a complex with PTPRZ1 and CTNNB1; this complex inactivates PTPRZ1 protein tyrosine phosphatase activity through PTN interaction and stimulates tyrosine phosphorylation of CTNNB1. Interacts with ITGB3 and ITGA5. Forms a complex with PTPRZ1 and integrin alpha-V/beta-3 (ITGAV:ITGB3) that stimulates endothelial cell migration through ITGB3 'Tyr-773' phosphorylation. Interacts with SDC3 (via heparan sulfate chains); this interaction mediates the neurite outgrowth-promoting signal from PTN to the cytoskeleton of growing neurites; this interaction mediates osteoblast recruitment. Interacts with GPC2 (via heparan sulfate); this interaction promotes neurite outgrowth through binding of PTN with chondroitin sulfate of proteoglycans, thereby releasing PTPRS of chondroitin sulfate proteoglycans (CSPGs) and leading to binding with heparan sulfate of GPC2. Post-translationally, phosphorylated by NEK6.

It is found in the secreted. Its function is as follows. Secreted growth factor that mediates its signal through cell-surface proteoglycan and non-proteoglycan receptors. Binds cell-surface proteoglycan receptor via their chondroitin sulfate (CS) groups. Thereby regulates many processes like cell proliferation, cell survival, cell growth, cell differentiation and cell migration in several tissues namely neuron and bone. Also plays a role in synaptic plasticity and learning-related behavior by inhibiting long-term synaptic potentiation. Binds PTPRZ1, leading to neutralization of the negative charges of the CS chains of PTPRZ1, inducing PTPRZ1 clustering, thereby causing the dimerization and inactivation of its phosphatase activity leading to increased tyrosine phosphorylation of each of the PTPRZ1 substrates like ALK, CTNNB1 or AFAP1L2 in order to activate the PI3K-AKT pathway. Through PTPRZ1 binding controls oligodendrocyte precursor cell differentiation by enhancing the phosphorylation of AFAP1L2 in order to activate the PI3K-AKT pathway. Forms a complex with PTPRZ1 and integrin alpha-V/beta-3 (ITGAV:ITGB3) that stimulates endothelial cell migration through SRC dephosphorylation and activation that consequently leads to ITGB3 'Tyr-773' phosphorylation. In adult hippocampus promotes dendritic arborization, spine development, and functional integration and connectivity of newborn granule neurons through ALK by activating AKT signaling pathway. Binds GPC2 and chondroitin sulfate proteoglycans (CSPGs) at the neuron surface, leading to abrogation of binding between PTPRS and CSPGs and neurite outgrowth promotion. Binds SDC3 and mediates bone formation by recruiting and attaching osteoblasts/osteoblast precursors to the sites for new bone deposition. Binds ALK and promotes cell survival and cell proliferation through MAPK pathway activation. Inhibits proliferation and enhances differentiation of neural stem cells by inhibiting FGF2-induced fibroblast growth factor receptor signaling pathway. Mediates regulatory mechanisms in normal hemostasis and in hematopoietic regeneration and in maintaining the balance of myeloid and lymphoid regeneration. In addition may play a role in the female reproductive system, auditory response and the progesterone-induced decidualization pathway. The sequence is that of Pleiotrophin from Sus scrofa (Pig).